A 380-amino-acid chain; its full sequence is MAPNIRKSHPLLKIINTSLIDLPAPSNISAWWNFGSLLAMCLMTQIITGLLLATHYTADTTLAFSSVAHTCRNVQYGWLIRNLHANGASFFFICIYLHIGRGLYYGSYLYKETWNTGVILLLTLMATAFVGYVLHEGQMSFWGATVITNLFSAIPYIGQTLVEWAWGGFSVDNPTLTRFFALHFLLPFIIAGITIIHLAFLHESGSNNPLGISSDSDKIPFHPYYSLKDILGLALMITPLLTLALFSPNLLGDPENFTPANPLTTPPHIKPEWYFLFAYAILRSIPNKLGGVLALAASVLILLLIPFLHKSKQRTMTFRPLSQILFWLLAANLLILTWIGSQPVEHPFIIIGQLASFSYFTTILILFPIIGTLENKMLNY.

4 helical membrane-spanning segments follow: residues 34-54 (FGSL…LLAT), 78-99 (WLIR…YLHI), 114-134 (WNTG…GYVL), and 179-199 (FFAL…IHLA). 2 residues coordinate heme b: histidine 84 and histidine 98. Heme b-binding residues include histidine 183 and histidine 197. Histidine 202 provides a ligand contact to a ubiquinone. 4 helical membrane passes run 227 to 247 (LKDI…ALFS), 289 to 309 (LGGV…PFLH), 321 to 341 (LSQI…WIGS), and 348 to 368 (FIII…ILFP).

The protein belongs to the cytochrome b family. In terms of assembly, the cytochrome bc1 complex contains 11 subunits: 3 respiratory subunits (MT-CYB, CYC1 and UQCRFS1), 2 core proteins (UQCRC1 and UQCRC2) and 6 low-molecular weight proteins (UQCRH/QCR6, UQCRB/QCR7, UQCRQ/QCR8, UQCR10/QCR9, UQCR11/QCR10 and a cleavage product of UQCRFS1). This cytochrome bc1 complex then forms a dimer. It depends on heme b as a cofactor.

The protein resides in the mitochondrion inner membrane. Functionally, component of the ubiquinol-cytochrome c reductase complex (complex III or cytochrome b-c1 complex) that is part of the mitochondrial respiratory chain. The b-c1 complex mediates electron transfer from ubiquinol to cytochrome c. Contributes to the generation of a proton gradient across the mitochondrial membrane that is then used for ATP synthesis. This is Cytochrome b (MT-CYB) from Callipepla gambelii (Gambel's quail).